Consider the following 190-residue polypeptide: MSTRKRRGGAINSRQAQKRTREATSTPEISLEAEPIELVETAGDEIVDLTCESLEPVVVDLTHNDSVVIVDERRRPRRNARRLPQDHADSCVVSSDDEELSRDRDVYVTTHTPRNARDEGATGLRPSGTVSCPICMDGYSEIVQNGRLIVSTECGHVFCSQCLRDSLKNANTCPTCRKKINHKRYHPIYI.

Residues 1–16 (MSTRKRRGGAINSRQA) form a required for ubiquitination activity region. The tract at residues 1 to 29 (MSTRKRRGGAINSRQAQKRTREATSTPEI) is disordered. Residues 4–61 (RKRRGGAINSRQAQKRTREATSTPEISLEAEPIELVETAGDEIVDLTCESLEPVVVDL) form a mediates interaction with TRPS1 region. Short sequence motifs (SUMO interaction motif) lie at residues 36–39 (IELV), 46–49 (IVDL), 57–59 (VVV), and 67–70 (VVIV). Phosphoserine is present on residues Ser-94 and Ser-95. Positions 132, 135, 154, 156, 159, 162, 173, and 176 each coordinate Zn(2+). Residues 132-177 (CPICMDGYSEIVQNGRLIVSTECGHVFCSQCLRDSLKNANTCPTCR) form an RING-type zinc finger.

As to quaternary structure, homodimer (via RING-type zinc finger domain). Interacts with GSC2. Interacts with AR/the androgen receptor and TBP. Interacts with TCF20. Interacts with PATZ1. Interacts with TRPS1; negatively regulates TRPS1 transcriptional repressor activity. Interacts with PML (isoform PML-1, isoform PML-2, isoform PML-3, isoform PML-4, isoform PML-5 and isoform PML-6). Interacts with PRDM1/Blimp-1. Post-translationally, sumoylated; conjugated by one or two SUMO1 moieties. In terms of processing, autoubiquitinated. Widely expressed at low levels in many tissues; highly expressed in testis.

The protein resides in the cytoplasm. It is found in the nucleus. Its subcellular location is the PML body. The catalysed reaction is S-ubiquitinyl-[E2 ubiquitin-conjugating enzyme]-L-cysteine + [acceptor protein]-L-lysine = [E2 ubiquitin-conjugating enzyme]-L-cysteine + N(6)-ubiquitinyl-[acceptor protein]-L-lysine.. It functions in the pathway protein modification; protein ubiquitination. In terms of biological role, E3 ubiquitin-protein ligase which binds polysumoylated chains covalently attached to proteins and mediates 'Lys-6'-, 'Lys-11'-, 'Lys-48'- and 'Lys-63'-linked polyubiquitination of those substrates and their subsequent targeting to the proteasome for degradation. Regulates the degradation of several proteins including PML and the transcriptional activator PEA3. Involved in chromosome alignment and spindle assembly, it regulates the kinetochore CENPH-CENPI-CENPK complex by targeting polysumoylated CENPI to proteasomal degradation. Regulates the cellular responses to hypoxia and heat shock through degradation of respectively EPAS1 and PARP1. Alternatively, it may also bind DNA/nucleosomes and have a more direct role in the regulation of transcription for instance enhancing basal transcription and steroid receptor-mediated transcriptional activation. Catalyzes ubiquitination of sumoylated PARP1 in response to PARP1 trapping to chromatin, leading to PARP1 removal from chromatin by VCP/p97. The polypeptide is E3 ubiquitin-protein ligase RNF4 (Homo sapiens (Human)).